A 111-amino-acid polypeptide reads, in one-letter code: DIVLTQSPASLAVSLGQRATISCRASKSVSAFGYSYMHWYQQKPGQPPKLLIYLASNLESGVPARFSGSGSGTDFTLNIHPVEEEDAVTYYCQHSRELPPTFGGGTKLEIK.

Positions 1 to 23 (DIVLTQSPASLAVSLGQRATISC) are framework-1. Cys23 and Cys92 form a disulfide bridge. Positions 24–38 (RASKSVSAFGYSYMH) are complementarity-determining-1. A framework-2 region spans residues 39 to 53 (WYQQKPGQPPKLLIY). The interval 54 to 60 (LASNLES) is complementarity-determining-2. The framework-3 stretch occupies residues 61 to 92 (GVPARFSGSGSGTDFTLNIHPVEEEDAVTYYC). The tract at residues 93 to 101 (QHSRELPPT) is complementarity-determining-3. The segment at 102 to 111 (FGGGTKLEIK) is framework-4.

This Mus musculus (Mouse) protein is Ig kappa chain V-III region PC 7940.